Here is a 339-residue protein sequence, read N- to C-terminus: Catalase-related peroxidase (339 aa).

The signal sequence occupies residues 1 to 31 (MIRIRNRWFRWLAIALASLVASIGIATVGFA). Residue H58 is part of the active site. Heme is bound at residue Y328.

It belongs to the catalase family. The cofactor is heme.

The protein localises to the periplasm. Has an organic peroxide-dependent peroxidase activity. The polypeptide is Catalase-related peroxidase (srpA) (Synechococcus elongatus (strain ATCC 33912 / PCC 7942 / FACHB-805) (Anacystis nidulans R2)).